The sequence spans 373 residues: tRNA-specific 2-thiouridylase MnmA (373 aa).

Residues 12-19 (GMSGGVDS) and methionine 38 each bind ATP. Residues 98–100 (NPD) form an interaction with target base in tRNA region. Cysteine 103 functions as the Nucleophile in the catalytic mechanism. The cysteines at positions 103 and 200 are disulfide-linked. An ATP-binding site is contributed by glycine 127. Residues 150 to 152 (KDQ) form an interaction with tRNA region. Cysteine 200 functions as the Cysteine persulfide intermediate in the catalytic mechanism. The segment at 312 to 313 (RY) is interaction with tRNA.

It belongs to the MnmA/TRMU family.

The protein localises to the cytoplasm. The enzyme catalyses S-sulfanyl-L-cysteinyl-[protein] + uridine(34) in tRNA + AH2 + ATP = 2-thiouridine(34) in tRNA + L-cysteinyl-[protein] + A + AMP + diphosphate + H(+). Catalyzes the 2-thiolation of uridine at the wobble position (U34) of tRNA, leading to the formation of s(2)U34. The protein is tRNA-specific 2-thiouridylase MnmA of Streptococcus pneumoniae (strain ATCC BAA-255 / R6).